A 246-amino-acid chain; its full sequence is UDP-N-acetyl-D-mannosaminuronic acid transferase (246 aa).

Belongs to the glycosyltransferase 26 family.

It catalyses the reaction UDP-N-acetyl-alpha-D-mannosaminouronate + N-acetyl-alpha-D-glucosaminyl-di-trans,octa-cis-undecaprenyl diphosphate = beta-D-ManNAcA-(1-&gt;4)-alpha-D-GlcNAc-di-trans,octa-cis-undecaprenyl diphosphate + UDP + H(+). The protein operates within bacterial outer membrane biogenesis; enterobacterial common antigen biosynthesis. Its function is as follows. Catalyzes the synthesis of Und-PP-GlcNAc-ManNAcA (Lipid II), the second lipid-linked intermediate involved in enterobacterial common antigen (ECA) synthesis. This is UDP-N-acetyl-D-mannosaminuronic acid transferase from Escherichia fergusonii (strain ATCC 35469 / DSM 13698 / CCUG 18766 / IAM 14443 / JCM 21226 / LMG 7866 / NBRC 102419 / NCTC 12128 / CDC 0568-73).